A 39-amino-acid polypeptide reads, in one-letter code: MKVRPSVKPMCEHCKVIRRKGRVMIICSANPKHKQRQGK.

It belongs to the bacterial ribosomal protein bL36 family.

The sequence is that of Large ribosomal subunit protein bL36 from Lactiplantibacillus plantarum (strain ATCC BAA-793 / NCIMB 8826 / WCFS1) (Lactobacillus plantarum).